The sequence spans 51 residues: Insulin (51 aa).

3 cysteine pairs are disulfide-bonded: C7-C37, C19-C50, and C36-C41.

Belongs to the insulin family. Heterodimer of a B chain and an A chain linked by two disulfide bonds.

The protein localises to the secreted. Insulin decreases blood glucose concentration. It increases cell permeability to monosaccharides, amino acids and fatty acids. It accelerates glycolysis, the pentose phosphate cycle, and glycogen synthesis in liver. This chain is Insulin (INS), found in Alligator mississippiensis (American alligator).